Reading from the N-terminus, the 191-residue chain is Xanthine phosphoribosyltransferase (191 aa).

Xanthine contacts are provided by Leu20 and Asn27. Residue 128-132 (ANGQA) participates in 5-phospho-alpha-D-ribose 1-diphosphate binding. Residue Lys156 coordinates xanthine.

It belongs to the purine/pyrimidine phosphoribosyltransferase family. Xpt subfamily. Homodimer.

It localises to the cytoplasm. The enzyme catalyses XMP + diphosphate = xanthine + 5-phospho-alpha-D-ribose 1-diphosphate. Its pathway is purine metabolism; XMP biosynthesis via salvage pathway; XMP from xanthine: step 1/1. Converts the preformed base xanthine, a product of nucleic acid breakdown, to xanthosine 5'-monophosphate (XMP), so it can be reused for RNA or DNA synthesis. The protein is Xanthine phosphoribosyltransferase of Levilactobacillus brevis (strain ATCC 367 / BCRC 12310 / CIP 105137 / JCM 1170 / LMG 11437 / NCIMB 947 / NCTC 947) (Lactobacillus brevis).